We begin with the raw amino-acid sequence, 350 residues long: C4-dicarboxylate-binding protein DctB (350 aa).

The N-terminal stretch at 1–18 is a signal peptide; it reads MKSLLACLALMIAGIATA.

Belongs to the bacterial solute-binding protein 7 family.

Its subcellular location is the secreted. Its function is as follows. Part of the binding-protein-dependent transport system for uptake of C4-dicarboxylates. Responsible for growth on fumarate and succinate but not malate. Is not directly involved in C4-dicarboxylate uptake, but plays a sensory role in the DctS/DctR two-component system which regulates the expression of the dctA C4-dicarboxylate transporter. This chain is C4-dicarboxylate-binding protein DctB (dctB), found in Bacillus subtilis (strain 168).